Reading from the N-terminus, the 683-residue chain is MPSRLSPPDIPPLQPTPTVSDGHHRFQTLPLIIAGSLTLTGVLLILVTLLIYRRLYRNRTAPSDLISNSKSPQHYQCRRFSYSQLRRATNSFSESTHLGHGGFGSVYKADFPSGGDSLAVKVMDTSAGSLQGEREFHNELSLSSHLIGSPHVVSLLGFSSDRRGRKLILVYELMANRSLQDALLDRKCVELMDWNKRFEIATDIAKGIEFLHHCCDPIIIHGDIKPSNILLDSDFKAKIGDFGLARVKSEDFDTRILIEEEDKSKDVVEDNGSILEETESVITVFEEGNNVVNLSPETCGISVLTETVASPGEKSGLSPENCAVSILTVEVGAASPAMASIPSPETCAISVLTDTGLSPESSKLKVGSKRDWWWKQDNNGGSRGGIESGSVKDYVMEWIGSEIKKERPSNNKEWINNGDGSSSVSKKKKKEKKRKPREWWKEEFCEELTRKKRKKKKKKKRGLSSISSIDSWFHRDDGASSVHDHNLNPTKRKKRNSIDWWVDGLSGELKSVMGKKNSQDSGLWCDVNVQKSGGVSSTPSMRGTVCYIAPECGGGGVLSEKCDVYSFGVLLLVLVSGRRPLQVTASPMSEFERANLISWAKQLACNGKLLELVDKSIHSLEKEQAVLCITIALLCLQRSPVKRPTMKEIVEMLSGVSEPPHLPFEFSPSPPMGFPFKSRKKAR.

The segment at 1–21 is disordered; the sequence is MPSRLSPPDIPPLQPTPTVSD. Residues 1 to 30 lie on the Extracellular side of the membrane; sequence MPSRLSPPDIPPLQPTPTVSDGHHRFQTLP. The helical transmembrane segment at 31–51 threads the bilayer; the sequence is LIIAGSLTLTGVLLILVTLLI. Residues 52–683 lie on the Cytoplasmic side of the membrane; that stretch reads YRRLYRNRTA…FPFKSRKKAR (632 aa). One can recognise a Protein kinase domain in the interval 92-664; it reads FSESTHLGHG…GVSEPPHLPF (573 aa). ATP is bound by residues 98–106 and lysine 121; that span reads LGHGGFGSV. The Proton acceptor role is filled by aspartate 223. The disordered stretch occupies residues 406–436; that stretch reads ERPSNNKEWINNGDGSSSVSKKKKKEKKRKP. The span at 411-424 shows a compositional bias: polar residues; the sequence is NKEWINNGDGSSSV. Positions 425 to 436 are enriched in basic residues; the sequence is SKKKKKEKKRKP.

Belongs to the protein kinase superfamily. Ser/Thr protein kinase family.

The protein localises to the cell membrane. The enzyme catalyses L-seryl-[protein] + ATP = O-phospho-L-seryl-[protein] + ADP + H(+). It carries out the reaction L-threonyl-[protein] + ATP = O-phospho-L-threonyl-[protein] + ADP + H(+). This is Receptor-like serine/threonine-protein kinase At2g45590 from Arabidopsis thaliana (Mouse-ear cress).